The primary structure comprises 324 residues: NADH-ubiquinone oxidoreductase chain 1 (324 aa).

The next 8 membrane-spanning stretches (helical) occupy residues 3-23 (LLFM…AVAF), 73-93 (LLFI…WTPF), 106-126 (ILFI…SGWA), 151-171 (ALII…AFAI), 175-195 (FTWF…STLA), 226-246 (LFFL…TIIF), 255-275 (TLTT…FLWV), and 295-315 (FLPL…SLLF).

It belongs to the complex I subunit 1 family.

Its subcellular location is the mitochondrion inner membrane. It catalyses the reaction a ubiquinone + NADH + 5 H(+)(in) = a ubiquinol + NAD(+) + 4 H(+)(out). Core subunit of the mitochondrial membrane respiratory chain NADH dehydrogenase (Complex I) that is believed to belong to the minimal assembly required for catalysis. Complex I functions in the transfer of electrons from NADH to the respiratory chain. The immediate electron acceptor for the enzyme is believed to be ubiquinone. The protein is NADH-ubiquinone oxidoreductase chain 1 (MT-ND1) of Aquarana catesbeiana (American bullfrog).